Consider the following 202-residue polypeptide: Superoxide dismutase [Mn], mitochondrial (202 aa).

The transit peptide at 1-5 directs the protein to the mitochondrion; sequence HGRGM. His-31 is a binding site for Mn(2+). A 3'-nitrotyrosine modification is found at Tyr-39. Lys-49 bears the N6-acetyllysine; alternate mark. Lys-49 bears the N6-succinyllysine; alternate mark. His-79 contributes to the Mn(2+) binding site. Lys-95 carries the post-translational modification N6-acetyllysine. Residues Lys-103 and Lys-111 each carry the N6-acetyllysine; alternate modification. An N6-succinyllysine; alternate mark is found at Lys-103 and Lys-111. Mn(2+) is bound by residues Asp-164 and His-168. N6-acetyllysine is present on Lys-183.

It belongs to the iron/manganese superoxide dismutase family. As to quaternary structure, homotetramer. The cofactor is Mn(2+). Nitrated under oxidative stress. Nitration coupled with oxidation inhibits the catalytic activity. In terms of processing, acetylation at Lys-122 decreases enzymatic activity. Deacetylated by SIRT3 upon exposure to ionizing radiations or after long fasting. Post-translationally, polyubiquitinated; leading to proteasomal degradation. Deubiquitinated by USP36 which increases protein stability.

The protein localises to the mitochondrion matrix. The enzyme catalyses 2 superoxide + 2 H(+) = H2O2 + O2. Destroys superoxide anion radicals which are normally produced within the cells and which are toxic to biological systems. The chain is Superoxide dismutase [Mn], mitochondrial (SOD2) from Oryctolagus cuniculus (Rabbit).